Here is a 104-residue protein sequence, read N- to C-terminus: Cytochrome c oxidase assembly factor 6 (104 aa).

Positions 1-22 (MGLFSFDGGKKESQPPNTRSQR) are disordered. The CHCH domain maps to 22 to 76 (RKLCWESRDAFFQCLDKADILDAMDPKNSKSIKSHCKVENEKFEENCAHSWIKYF). The Cx9C motif signature appears at 25–35 (CWESRDAFFQC). Intrachain disulfides connect cysteine 25–cysteine 68 and cysteine 35–cysteine 57. The Cx10C motif motif lies at 57 to 68 (CKVENEKFEENC).

The protein belongs to the cytochrome c oxidase subunit 6B family. As to quaternary structure, interacts with COX2.

Its subcellular location is the cytoplasm. The protein localises to the nucleus. The protein resides in the mitochondrion intermembrane space. Functionally, involved in the maturation of the mitochondrial respiratory chain complex IV subunit MT-CO2/COX2. Thereby, may regulate early steps of complex IV assembly. Mitochondrial respiratory chain complex IV or cytochrome c oxidase is the component of the respiratory chain that catalyzes the transfer of electrons from intermembrane space cytochrome c to molecular oxygen in the matrix and as a consequence contributes to the proton gradient involved in mitochondrial ATP synthesis. May also be required for efficient formation of respiratory supercomplexes comprised of complexes III and IV. The polypeptide is Cytochrome c oxidase assembly factor 6 (Saccharomyces cerevisiae (strain ATCC 204508 / S288c) (Baker's yeast)).